The sequence spans 118 residues: Large ribosomal subunit protein bL20 (118 aa).

Belongs to the bacterial ribosomal protein bL20 family.

Functionally, binds directly to 23S ribosomal RNA and is necessary for the in vitro assembly process of the 50S ribosomal subunit. It is not involved in the protein synthesizing functions of that subunit. The chain is Large ribosomal subunit protein bL20 from Staphylococcus carnosus (strain TM300).